The primary structure comprises 498 residues: Glycerol kinase (498 aa).

ADP is bound at residue threonine 12. ATP-binding residues include threonine 12, threonine 13, and serine 14. Residue threonine 12 participates in sn-glycerol 3-phosphate binding. An ADP-binding site is contributed by arginine 16. 3 residues coordinate sn-glycerol 3-phosphate: arginine 82, tyrosine 134, and aspartate 243. Residues arginine 82, tyrosine 134, aspartate 243, and glutamine 244 each contribute to the glycerol site. ADP-binding residues include threonine 265 and glycine 308. ATP is bound by residues threonine 265, glycine 308, glutamine 312, and glycine 411. Glycine 411 provides a ligand contact to ADP.

This sequence belongs to the FGGY kinase family.

The enzyme catalyses glycerol + ATP = sn-glycerol 3-phosphate + ADP + H(+). The protein operates within polyol metabolism; glycerol degradation via glycerol kinase pathway; sn-glycerol 3-phosphate from glycerol: step 1/1. Its activity is regulated as follows. Inhibited by fructose 1,6-bisphosphate (FBP). In terms of biological role, key enzyme in the regulation of glycerol uptake and metabolism. Catalyzes the phosphorylation of glycerol to yield sn-glycerol 3-phosphate. In Brucella suis (strain ATCC 23445 / NCTC 10510), this protein is Glycerol kinase.